We begin with the raw amino-acid sequence, 1305 residues long: Contactin-associated protein-like 5 (1305 aa).

The signal sequence occupies residues 1–24 (MDSVPRLTGVFTLLLSGLWHLGSS). The Extracellular segment spans residues 25–1236 (ATNYNCDDPL…PLTNAVRSDS (1212 aa)). The F5/8 type C domain maps to 30 to 174 (CDDPLASLLS…IGMRVEVYGC (145 aa)). C30 and C174 form a disulfide bridge. Laminin G-like domains are found at residues 180-360 (VADF…TFSC) and 367-544 (PITF…IDLC). N282, N355, and N496 each carry an N-linked (GlcNAc...) asparagine glycan. An intrachain disulfide couples C329 to C360. 4 disulfides stabilise this stretch: C512–C544, C550–C561, C555–C570, and C572–C582. In terms of domain architecture, EGF-like 1 spans 546–583 (IKDRCLPNYCEHGGFCSQSWTTFYCNCSNTGYTGATCH). Residues 584–790 (NSLYEQSCEV…LRCYGDRHFW (207 aa)) form the Fibrinogen C-terminal domain. N622 carries N-linked (GlcNAc...) asparagine glycosylation. Positions 791 to 956 (NAVSFYTEAS…KVTSGVRPGC (166 aa)) constitute a Laminin G-like 3 domain. 5 cysteine pairs are disulfide-bonded: C929–C956, C960–C973, C967–C982, C984–C994, and C1163–C1198. Residues 957-995 (PGHCSTYGSICHNGGKCVEKYSGYFCDCTNSPYEGPFCK) enclose the EGF-like 2 domain. The 199-residue stretch at 1000–1198 (AVFEAGTSVT…VQGTLMESSC (199 aa)) folds into the Laminin G-like 4 domain. The chain crosses the membrane as a helical span at residues 1237 to 1257 (AVIGGVIAVVIFIIFSIIGIM). Residues 1258-1305 (TRFLYQHKQSHRTNQMKEKEYPENLDSSFRNDIDLQNTVSECKREYFI) lie on the Cytoplasmic side of the membrane.

Belongs to the neurexin family.

It localises to the membrane. Functionally, may play a role in the correct development and proper functioning of the peripheral and central nervous system and be involved in cell adhesion and intercellular communication. The sequence is that of Contactin-associated protein-like 5 (CNTNAP5) from Canis lupus familiaris (Dog).